The sequence spans 367 residues: MIRNWLTIFILFPLKLVEKCESSVSLTVPPVVKLENGSSTNVSLTLRPPLNATLVITFEITFRSKNITILELPDEVVVPPGVTNSSFQVTSQNVGQLTVYLHGNHSNQTGPRIRFLVIRSSAISIINQVIGWIYFVAWSISFYPQVIMNWRRKSVIGLSFDFVALNLTGFVAYSVFNIGLLWVPYIKEQFLLKYPNGVNPVNSNDVFFSLHAVVLTLIIIVQCCLYERGGQRVSWPAIGFLVLAWLFAFVTMIVAAVGVTTWLQFLFCFSYIKLAVTLVKYFPQAYMNFYYKSTEGWSIGNVLLDFTGGSFSLLQMFLQSYNNDQWTLIFGDPTKFGLGVFSIVFDVVFFIQHFCLYRKRPGYDQLN.

Residues 1 to 22 form the signal peptide; sequence MIRNWLTIFILFPLKLVEKCES. At 23 to 125 the chain is on the lumenal side; that stretch reads SVSLTVPPVV…LVIRSSAISI (103 aa). 3 N-linked (GlcNAc...) (high mannose) asparagine glycosylation sites follow: Asn36, Asn41, and Asn51. Asn66 carries an N-linked (GlcNAc...) asparagine glycan. 3 N-linked (GlcNAc...) (high mannose) asparagine glycosylation sites follow: Asn84, Asn104, and Asn107. The PQ-loop 1 domain occupies 123 to 189; it reads ISIINQVIGW…LLWVPYIKEQ (67 aa). Residues 126–150 form a helical membrane-spanning segment; it reads INQVIGWIYFVAWSISFYPQVIMNW. Over 151–159 the chain is Cytoplasmic; the sequence is RRKSVIGLS. A helical transmembrane segment spans residues 160 to 179; that stretch reads FDFVALNLTGFVAYSVFNIG. Asn166 contributes to the L-cystine binding site. Topologically, residues 180 to 202 are lumenal; it reads LLWVPYIKEQFLLKYPNGVNPVN. The chain crosses the membrane as a helical span at residues 203-225; the sequence is SNDVFFSLHAVVLTLIIIVQCCL. Asp205 provides a ligand contact to H(+). Topologically, residues 226-234 are cytoplasmic; that stretch reads YERGGQRVS. The chain crosses the membrane as a helical span at residues 235–257; it reads WPAIGFLVLAWLFAFVTMIVAAV. The Lumenal portion of the chain corresponds to 258–263; sequence GVTTWL. Residues 263–328 form the PQ-loop 2 domain; the sequence is LQFLFCFSYI…QSYNNDQWTL (66 aa). Residues 264–289 form a helical membrane-spanning segment; the sequence is QFLFCFSYIKLAVTLVKYFPQAYMNF. Residues Lys273, Lys280, and Tyr281 each contribute to the L-cystine site. Over 290 to 298 the chain is Cytoplasmic; sequence YYKSTEGWS. Residues 299–308 traverse the membrane as a helical segment; it reads IGNVLLDFTG. The L-cystine site is built by Asn301 and Asp305. H(+) is bound at residue Asp305. Residues 309–331 are Lumenal-facing; the sequence is GSFSLLQMFLQSYNNDQWTLIFG. A helical membrane pass occupies residues 332 to 354; the sequence is DPTKFGLGVFSIVFDVVFFIQHF. Asp346 contacts H(+). The Cytoplasmic segment spans residues 355–367; the sequence is CLYRKRPGYDQLN. A Lysosomal targeting motif motif is present at residues 362 to 366; the sequence is GYDQL.

The protein belongs to the cystinosin family. Interacts with components of the V-ATPase complex. Interacts with components of the Ragulator complex. Interacts with RRAGA/RagA and RRAGC/RagC. Interacts with AP-3 complex subunit mu (AP3M1 or AP3M2). As to expression, strongly expressed in pancreas, kidney (adult and fetal), skeletal muscle, melanocytes and keratinocytes. Expressed at lower levels in placenta and heart. Weakly expressed in lung, liver and brain (adult and fetal). Represents 5-20 % of CTNS transcripts, with the exception of the testis that expresses both isoforms in equal proportions.

Its subcellular location is the lysosome membrane. It is found in the melanosome membrane. The protein localises to the cell membrane. It carries out the reaction L-cystine(out) + H(+)(out) = L-cystine(in) + H(+)(in). Switches between a lumen- and a cytosol-open conformation: pH induces conformational changes and shifts the equilibrium to facilitate the transition between the lumen- and cytosol-open conformation, thereby promoting cystine transport. Protonation of specific aspartate residues (Asp-205, Asp-305 and Asp-346) favors the cytosol-open conformation. In terms of biological role, cystine/H(+) symporter that mediates export of cystine, the oxidized dimer of cysteine, from lysosomes. Plays an important role in melanin synthesis by catalyzing cystine export from melanosomes, possibly by inhibiting pheomelanin synthesis. In addition to cystine export, also acts as a positive regulator of mTORC1 signaling in kidney proximal tubular cells, via interactions with components of the v-ATPase and Ragulator complexes. Also involved in small GTPase-regulated vesicle trafficking and lysosomal localization of LAMP2A, independently of cystine transporter activity. The polypeptide is Cystinosin (Homo sapiens (Human)).